The chain runs to 372 residues: Methylthioribose-1-phosphate isomerase 2 (372 aa).

Aspartate 254 acts as the Proton donor in catalysis.

The protein belongs to the eIF-2B alpha/beta/delta subunits family. MtnA subfamily.

The protein localises to the cytoplasm. The protein resides in the nucleus. It carries out the reaction 5-(methylsulfanyl)-alpha-D-ribose 1-phosphate = 5-(methylsulfanyl)-D-ribulose 1-phosphate. It functions in the pathway amino-acid biosynthesis; L-methionine biosynthesis via salvage pathway; L-methionine from S-methyl-5-thio-alpha-D-ribose 1-phosphate: step 1/6. Functionally, catalyzes the interconversion of methylthioribose-1-phosphate (MTR-1-P) into methylthioribulose-1-phosphate (MTRu-1-P). The protein is Methylthioribose-1-phosphate isomerase 2 of Trypanosoma cruzi (strain CL Brener).